Here is a 375-residue protein sequence, read N- to C-terminus: Succinyl-diaminopimelate desuccinylase (375 aa).

Residue His-66 participates in Zn(2+) binding. The active site involves Asp-68. Asp-99 is a binding site for Zn(2+). The Proton acceptor role is filled by Glu-133. Glu-134, Glu-162, and His-348 together coordinate Zn(2+).

Belongs to the peptidase M20A family. DapE subfamily. As to quaternary structure, homodimer. It depends on Zn(2+) as a cofactor. Co(2+) is required as a cofactor.

The catalysed reaction is N-succinyl-(2S,6S)-2,6-diaminopimelate + H2O = (2S,6S)-2,6-diaminopimelate + succinate. It participates in amino-acid biosynthesis; L-lysine biosynthesis via DAP pathway; LL-2,6-diaminopimelate from (S)-tetrahydrodipicolinate (succinylase route): step 3/3. In terms of biological role, catalyzes the hydrolysis of N-succinyl-L,L-diaminopimelic acid (SDAP), forming succinate and LL-2,6-diaminopimelate (DAP), an intermediate involved in the bacterial biosynthesis of lysine and meso-diaminopimelic acid, an essential component of bacterial cell walls. This chain is Succinyl-diaminopimelate desuccinylase, found in Escherichia coli O157:H7.